A 472-amino-acid chain; its full sequence is PEP-dependent dihydroxyacetone kinase, phosphoryl donor subunit DhaM (472 aa).

The PTS EIIA type-4 domain occupies Met-1–Leu-135. The active-site Tele-phosphohistidine intermediate is His-9. The region spanning Ala-156–Pro-243 is the HPr domain. His-170 functions as the Pros-phosphohistidine intermediate in the catalytic mechanism. Residues Pro-266–Gly-472 are PTS EI-like, N-terminal part. Catalysis depends on His-432, which acts as the Tele-phosphohistidine intermediate.

The protein belongs to the PEP-utilizing enzyme family. Homodimer. The dihydroxyacetone kinase complex is composed of a homodimer of DhaM, a homodimer of DhaK and the subunit DhaL.

It catalyses the reaction dihydroxyacetone + phosphoenolpyruvate = dihydroxyacetone phosphate + pyruvate. Component of the dihydroxyacetone kinase complex, which is responsible for the phosphoenolpyruvate (PEP)-dependent phosphorylation of dihydroxyacetone. DhaM serves as the phosphoryl donor. Is phosphorylated by phosphoenolpyruvate in an EI- and HPr-dependent reaction, and a phosphorelay system on histidine residues finally leads to phosphoryl transfer to DhaL and dihydroxyacetone. The chain is PEP-dependent dihydroxyacetone kinase, phosphoryl donor subunit DhaM from Klebsiella michiganensis (strain ATCC 8724 / DSM 4798 / JCM 20051 / NBRC 3318 / NRRL B-199 / KCTC 1686 / BUCSAV 143 / CCM 1901).